Here is a 1405-residue protein sequence, read N- to C-terminus: DNA-directed RNA polymerase subunit beta' (1405 aa).

C70, C72, C85, and C88 together coordinate Zn(2+). The Mg(2+) site is built by D458, D460, and D462. Residues C813, C887, C894, and C897 each contribute to the Zn(2+) site.

This sequence belongs to the RNA polymerase beta' chain family. The RNAP catalytic core consists of 2 alpha, 1 beta, 1 beta' and 1 omega subunit. When a sigma factor is associated with the core the holoenzyme is formed, which can initiate transcription. Requires Mg(2+) as cofactor. The cofactor is Zn(2+).

The catalysed reaction is RNA(n) + a ribonucleoside 5'-triphosphate = RNA(n+1) + diphosphate. In terms of biological role, DNA-dependent RNA polymerase catalyzes the transcription of DNA into RNA using the four ribonucleoside triphosphates as substrates. The protein is DNA-directed RNA polymerase subunit beta' of Albidiferax ferrireducens (strain ATCC BAA-621 / DSM 15236 / T118) (Rhodoferax ferrireducens).